A 141-amino-acid polypeptide reads, in one-letter code: Large ribosomal subunit protein uL11 (141 aa).

The protein belongs to the universal ribosomal protein uL11 family. In terms of assembly, part of the ribosomal stalk of the 50S ribosomal subunit. Interacts with L10 and the large rRNA to form the base of the stalk. L10 forms an elongated spine to which L12 dimers bind in a sequential fashion forming a multimeric L10(L12)X complex. In terms of processing, one or more lysine residues are methylated.

Forms part of the ribosomal stalk which helps the ribosome interact with GTP-bound translation factors. This is Large ribosomal subunit protein uL11 from Ruminiclostridium cellulolyticum (strain ATCC 35319 / DSM 5812 / JCM 6584 / H10) (Clostridium cellulolyticum).